Consider the following 475-residue polypeptide: Aspartyl/glutamyl-tRNA(Asn/Gln) amidotransferase subunit B (475 aa).

The protein belongs to the GatB/GatE family. GatB subfamily. As to quaternary structure, heterotrimer of A, B and C subunits.

The enzyme catalyses L-glutamyl-tRNA(Gln) + L-glutamine + ATP + H2O = L-glutaminyl-tRNA(Gln) + L-glutamate + ADP + phosphate + H(+). The catalysed reaction is L-aspartyl-tRNA(Asn) + L-glutamine + ATP + H2O = L-asparaginyl-tRNA(Asn) + L-glutamate + ADP + phosphate + 2 H(+). Its function is as follows. Allows the formation of correctly charged Asn-tRNA(Asn) or Gln-tRNA(Gln) through the transamidation of misacylated Asp-tRNA(Asn) or Glu-tRNA(Gln) in organisms which lack either or both of asparaginyl-tRNA or glutaminyl-tRNA synthetases. The reaction takes place in the presence of glutamine and ATP through an activated phospho-Asp-tRNA(Asn) or phospho-Glu-tRNA(Gln). The sequence is that of Aspartyl/glutamyl-tRNA(Asn/Gln) amidotransferase subunit B from Pediococcus pentosaceus (strain ATCC 25745 / CCUG 21536 / LMG 10740 / 183-1w).